The primary structure comprises 935 residues: MEGNTNWKPNEQGGNRDAANNRIDWRSQHEPELRQKVLSKIVEKFKEKFHAHEEYKINDIASKFEENFYSIATDKTTTSQQWLQQNTQSNLCVICFAKSGPYNRSRFSKTDTCSVTAAATSSAKFVETTYSTAFSSIKLTKHSITDQKSVFDTTEQKRQEQEQLINQLTNLPTSRPNNRDQQGAFQVSSSQQNNNVTLHAMSQQKNNLQSMTRGQQVGQSQPMMSQQYRQQYPMQQDPQNRNLQKHLDFVQNNTNQFQAASSLRQTQNITDQQNQPQQLERANPSILIMNIIVASQDSTGKTVNVNAGNWQEETYQKIKKLKEMCLPVLSLMHQRVAEKLRETESLPPQPMQAQWIEKLKAGKLSMEHLMFFLNVHRSSVSEKHRDKFSQYEYHILKFTKSQTMVLRPTQQQQGQFPPSQTAMQTQSPQVHVSQSLYKEQRRSRLMPSSQNEASSLLQIRPKLDPRDENIIMASSGNVMLPSVKQNPRAVNTNISSVQSLQKQKRFHHRQMQQQQPQQGNHQHQMQTNEMNDVRMRERVNIKARLLEQQVSSSQRQVPKQESNVSSSQIQNHSSPQLVDQHILPATINKTGTPLNSSGSAFVAPAPSPVPGDSEMPISVESPVSGVDEINSTLDSSSKLGTQETPLLFVPPPEPITERPIDRLIKAFQAASPKSLAESVSEISSVISMVDMIGGSFPSSGGSRAGLGEDLSERTRNFTTHEETNLSKRMKRSINIVPPDMSSQIDSYEQLSSLESEVVSTTSSGLKVNNIAPGYALLQEIKETNGRLVETVVEICDEDSLGTIVTCTYAPVALSATFKDHYKSGKIIFYVSKCLMQAQIQPLRLLFPMDYPYSSPIVLEEISFDTSVHKYEDLSARTRSRFSLSMKEFSEPGFSKGIAQTWNDCARATMVEYAERHGGGTFSSKYGAWETVLRAS.

Positions 1-13 are enriched in polar residues; the sequence is MEGNTNWKPNEQG. 5 disordered regions span residues 1-28, 170-190, 495-526, 548-611, and 635-654; these read MEGNTNWKPNEQGGNRDAANNRIDWRSQ, NLPTSRPNNRDQQGAFQVSSS, SSVQSLQKQKRFHHRQMQQQQPQQGNHQHQMQ, QQVS…PVPG, and SSSKLGTQETPLLFVPPPEP. The segment covering 511 to 526 has biased composition (low complexity); sequence MQQQQPQQGNHQHQMQ. 2 stretches are compositionally biased toward polar residues: residues 548–577 and 635–644; these read QQVSSSQRQVPKQESNVSSSQIQNHSSPQL and SSSKLGTQET.

It belongs to the plant Mediator complex subunit 15 family. Component of the Mediator complex.

It localises to the nucleus. In terms of biological role, component of the Mediator complex, a coactivator involved in the regulated transcription of nearly all RNA polymerase II-dependent genes. Mediator functions as a bridge to convey information from gene-specific regulatory proteins to the basal RNA polymerase II transcription machinery. The Mediator complex, having a compact conformation in its free form, is recruited to promoters by direct interactions with regulatory proteins and serves for the assembly of a functional preinitiation complex with RNA polymerase II and the general transcription factors. The protein is Probable mediator of RNA polymerase II transcription subunit 15c (MED15C) of Arabidopsis thaliana (Mouse-ear cress).